The primary structure comprises 236 residues: 2-C-methyl-D-erythritol 4-phosphate cytidylyltransferase (236 aa).

It belongs to the IspD/TarI cytidylyltransferase family. IspD subfamily. In terms of assembly, homodimer.

The catalysed reaction is 2-C-methyl-D-erythritol 4-phosphate + CTP + H(+) = 4-CDP-2-C-methyl-D-erythritol + diphosphate. It participates in isoprenoid biosynthesis; isopentenyl diphosphate biosynthesis via DXP pathway; isopentenyl diphosphate from 1-deoxy-D-xylulose 5-phosphate: step 2/6. Catalyzes the formation of 4-diphosphocytidyl-2-C-methyl-D-erythritol from CTP and 2-C-methyl-D-erythritol 4-phosphate (MEP). This chain is 2-C-methyl-D-erythritol 4-phosphate cytidylyltransferase, found in Escherichia coli O17:K52:H18 (strain UMN026 / ExPEC).